The chain runs to 314 residues: MEKIKQPVLVLVGPTAIGKTALSLQLARQFSCEVVSMDSMQVYRHMDIGTAKISKEEQGEVPHHLLDIVEPDEHYDASMYCRDALRTITEIHARGHIPLVTGGTGLYLQSLTKGFFEGPPSDSAVRERLQEELDNLGPEEMHARLEQLDPLSAQRLHPNDSYRVMRALEIFAITGKPWSQLLSQHKPENQFANMLQIGLTCDRPLLYDRINMRTQIMLDAGLEEEVRGLLDMGYSRELRSMGSIGYKHMANFIFGDWEFEEMKTLLARDTRRYAKRQYTWFNKDEDLHWYQKESKAEIVDRVGQWLEDQLSKNL.

13–20 is an ATP binding site; the sequence is GPTAIGKT. Residue 15 to 20 coordinates substrate; sequence TAIGKT. Residues 38-41 form an interaction with substrate tRNA region; that stretch reads DSMQ.

This sequence belongs to the IPP transferase family. In terms of assembly, monomer. The cofactor is Mg(2+).

It catalyses the reaction adenosine(37) in tRNA + dimethylallyl diphosphate = N(6)-dimethylallyladenosine(37) in tRNA + diphosphate. Catalyzes the transfer of a dimethylallyl group onto the adenine at position 37 in tRNAs that read codons beginning with uridine, leading to the formation of N6-(dimethylallyl)adenosine (i(6)A). The sequence is that of tRNA dimethylallyltransferase from Desulfotalea psychrophila (strain LSv54 / DSM 12343).